We begin with the raw amino-acid sequence, 193 residues long: Phosphoheptose isomerase (193 aa).

Residues 37-193 (LADSFKAGGK…QLIEKEMVKA (157 aa)) enclose the SIS domain. 52-54 (NGG) lines the substrate pocket. 2 residues coordinate Zn(2+): H61 and E65. Substrate is bound by residues E65, 93 to 94 (ND), 119 to 121 (STS), S124, and Q172. Positions 172 and 180 each coordinate Zn(2+).

It belongs to the SIS family. GmhA subfamily. In terms of assembly, homotetramer. Zn(2+) is required as a cofactor.

The protein localises to the cytoplasm. It catalyses the reaction 2 D-sedoheptulose 7-phosphate = D-glycero-alpha-D-manno-heptose 7-phosphate + D-glycero-beta-D-manno-heptose 7-phosphate. The protein operates within carbohydrate biosynthesis; D-glycero-D-manno-heptose 7-phosphate biosynthesis; D-glycero-alpha-D-manno-heptose 7-phosphate and D-glycero-beta-D-manno-heptose 7-phosphate from sedoheptulose 7-phosphate: step 1/1. It participates in bacterial outer membrane biogenesis; LPS core biosynthesis. Catalyzes the isomerization of sedoheptulose 7-phosphate in D-glycero-D-manno-heptose 7-phosphate. The chain is Phosphoheptose isomerase from Yersinia pestis.